The following is a 257-amino-acid chain: Beta-fibrinogenase mucrofibrase-4 (257 aa).

An N-terminal signal peptide occupies residues methionine 1–alanine 18. A propeptide spanning residues glutamine 19–leucine 24 is cleaved from the precursor. The 224-residue stretch at valine 25–alanine 248 folds into the Peptidase S1 domain. Cystine bridges form between cysteine 31-cysteine 162, cysteine 49-cysteine 65, cysteine 97-cysteine 255, cysteine 141-cysteine 209, cysteine 173-cysteine 188, and cysteine 199-cysteine 224. Residues histidine 64 and aspartate 109 each act as charge relay system in the active site. Serine 203 functions as the Charge relay system in the catalytic mechanism.

Belongs to the peptidase S1 family. Snake venom subfamily. In terms of assembly, monomer. In terms of tissue distribution, expressed by the venom gland.

It is found in the secreted. Functionally, snake venom serine protease with fibrinogenolytic activities. Cleaves beta-chain of fibrinogen (FGB) efficiently and shows relatively lower activity on alpha-chain. This is Beta-fibrinogenase mucrofibrase-4 from Protobothrops mucrosquamatus (Taiwan habu).